The primary structure comprises 380 residues: Cytochrome b (380 aa).

Helical transmembrane passes span 34-54 (FGSL…LLAM), 78-99 (WLIR…FLHI), 114-134 (WNTG…GYVL), and 179-199 (FFAL…IHLT). H84 and H98 together coordinate heme b. 2 residues coordinate heme b: H183 and H197. H202 contacts a ubiquinone. Helical transmembrane passes span 227–247 (LKDI…ALFS), 289–309 (LGGV…PFLH), 321–341 (LSQI…WIGS), and 348–368 (FIII…ILFP).

The protein belongs to the cytochrome b family. In terms of assembly, the cytochrome bc1 complex contains 11 subunits: 3 respiratory subunits (MT-CYB, CYC1 and UQCRFS1), 2 core proteins (UQCRC1 and UQCRC2) and 6 low-molecular weight proteins (UQCRH/QCR6, UQCRB/QCR7, UQCRQ/QCR8, UQCR10/QCR9, UQCR11/QCR10 and a cleavage product of UQCRFS1). This cytochrome bc1 complex then forms a dimer. Requires heme b as cofactor.

It localises to the mitochondrion inner membrane. In terms of biological role, component of the ubiquinol-cytochrome c reductase complex (complex III or cytochrome b-c1 complex) that is part of the mitochondrial respiratory chain. The b-c1 complex mediates electron transfer from ubiquinol to cytochrome c. Contributes to the generation of a proton gradient across the mitochondrial membrane that is then used for ATP synthesis. This chain is Cytochrome b (MT-CYB), found in Polyplectron bicalcaratum (Grey peacock-pheasant).